The sequence spans 253 residues: 5'-nucleotidase SurE (253 aa).

Aspartate 8, aspartate 9, serine 39, and asparagine 92 together coordinate a divalent metal cation.

This sequence belongs to the SurE nucleotidase family. A divalent metal cation serves as cofactor.

It localises to the cytoplasm. The catalysed reaction is a ribonucleoside 5'-phosphate + H2O = a ribonucleoside + phosphate. Functionally, nucleotidase that shows phosphatase activity on nucleoside 5'-monophosphates. The polypeptide is 5'-nucleotidase SurE (Burkholderia mallei (strain NCTC 10247)).